We begin with the raw amino-acid sequence, 388 residues long: L-lactate dehydrogenase (388 aa).

One can recognise an FMN hydroxy acid dehydrogenase domain in the interval 1–380; sequence MIISAASDYR…SADALSRVTR (380 aa). Tyrosine 24 provides a ligand contact to substrate. FMN is bound by residues serine 106 and glutamine 127. Residue tyrosine 129 coordinates substrate. FMN is bound at residue threonine 155. Position 164 (arginine 164) interacts with substrate. Lysine 251 contacts FMN. Histidine 275 (proton acceptor) is an active-site residue. Arginine 278 contributes to the substrate binding site. 306–330 provides a ligand contact to FMN; that stretch reads DSGIRSGLDVVRMLALGADAVLLGR.

Belongs to the FMN-dependent alpha-hydroxy acid dehydrogenase family. FMN is required as a cofactor.

The protein resides in the cell inner membrane. It catalyses the reaction (S)-lactate + A = pyruvate + AH2. Functionally, catalyzes the conversion of L-lactate to pyruvate. Is coupled to the respiratory chain. This is L-lactate dehydrogenase from Xanthomonas euvesicatoria pv. vesicatoria (strain 85-10) (Xanthomonas campestris pv. vesicatoria).